The following is a 415-amino-acid chain: Gamma-glutamyl phosphate reductase (415 aa).

The protein belongs to the gamma-glutamyl phosphate reductase family.

It localises to the cytoplasm. It carries out the reaction L-glutamate 5-semialdehyde + phosphate + NADP(+) = L-glutamyl 5-phosphate + NADPH + H(+). It participates in amino-acid biosynthesis; L-proline biosynthesis; L-glutamate 5-semialdehyde from L-glutamate: step 2/2. In terms of biological role, catalyzes the NADPH-dependent reduction of L-glutamate 5-phosphate into L-glutamate 5-semialdehyde and phosphate. The product spontaneously undergoes cyclization to form 1-pyrroline-5-carboxylate. The protein is Gamma-glutamyl phosphate reductase of Thermotoga sp. (strain RQ2).